Here is a 674-residue protein sequence, read N- to C-terminus: Acetyl-coenzyme A synthetase (674 aa).

CoA-binding positions include 201–204 and Thr-320; that span reads RGGR. Residues 396–398, 420–425, Asp-518, and Arg-533 contribute to the ATP site; these read GEP and DTYWQT. Ser-541 contributes to the CoA binding site. Arg-544 contacts ATP. A CoA-binding site is contributed by Arg-603.

The protein belongs to the ATP-dependent AMP-binding enzyme family.

It catalyses the reaction acetate + ATP + CoA = acetyl-CoA + AMP + diphosphate. The polypeptide is Acetyl-coenzyme A synthetase (acsA) (Dictyostelium discoideum (Social amoeba)).